A 777-amino-acid polypeptide reads, in one-letter code: MAPVQAADEMYDSNPHPDRRQLVSNGFEVNLPDQVEVIVRDLPDPSKVKEERTRLMGYWFVHWFDGKLFHLRIKAGGPNVDGEHRAIRTAEHPWLLRARLDDALEEALPKYAAVKKRPFTFLAQKDELIDAAATAAGLSHRLLNSFKVIPRFALSPKIYEPVDGTTRVGVFVTIGMRYDIEASLRDLLEAGIDLRGMYVVRRKRQPGERGLLGRVRAISDDMVQLFEETDLASVNVNDAKLEGSKENFTRCLSALLGHNYKKLLNALDDQEAGYRTGPRFDDAVRRMGEFLAKKPIRLADNINAQVGDRIVFSNEGQARNVRLAPKVEYVFDRTGAKSAEYAWRGLSQFGPFDRPSFANRSPRILVVYPSSTQGKVENFLSAFRDGMGSNYSGFSKGFVDLMGLTKVEFVMCPVEVSSADRNGAHTKYNSAIEDKLAGAGEVHAGIVVLFEDHARLPDDRNPYIHTKSLLLTLGVPTQQVRMPTVLLEPKSLQYTLQNFSIATYAKLNGTPWTVNHDKAINDELVVGMGLAELSGSRTEKRQRFVGITTVFAGDGSYLLGNVSKECEYEGYSDAIRESMTGILRELKKRNNWRPGDTVRVVFHAHRPLKRVDVASIVFECTREIGSDQNIQMAFVTVSHDHPFVLIDRSERGLEAYKGSTARKGVFAPPRGAISRVGRLTRLLAVNSPQLIKRANTPLPTPLLVSLHPDSTFKDVDYLAEQALKFTSLSWRSTLPAATPVTIFYSERIAELLGRLKSIPNWSSANLNIKLKWSRWFL.

Residues 1 to 107 (MAPVQAADEM…ARLDDALEEA (107 aa)) form an N-terminal domain region. A linker L1 region spans residues 108-182 (LPKYAAVKKR…TIGMRYDIEA (75 aa)). Residues 183–243 (SLRDLLEAGI…VNVNDAKLEG (61 aa)) are PAZ domain. The interval 244-341 (SKENFTRCLS…DRTGAKSAEY (98 aa)) is linker L2. The interval 342–509 (AWRGLSQFGP…SIATYAKLNG (168 aa)) is mid domain. Positions 445–757 (GIVVLFEDHA…IAELLGRLKS (313 aa)) constitute a Piwi domain. Residues 510 to 777 (TPWTVNHDKA…IKLKWSRWFL (268 aa)) form a PIWI domain region. L777 is a binding site for Mg(2+).

Belongs to the argonaute family. Long pAgo subfamily. It depends on Mg(2+) as a cofactor.

Its function is as follows. A catalytically inactive argonaute protein. Binds 5'-phosphorylated RNA as the guide (gRNA) and short DNA as target DNA (tDNA); does not bind other nucleic acid combinations, does not bind tDNA alone. Has highest affinity for gRNA that begins with 5'-phospho-U and poor affinity for gRNA with 5'-OH. Upon expression in E.coli, plasmid sequences are found in RsAgo, its induction leads to plasmid degradation and suppression of genes encoded on foreign plasmids, suggesting it may also interfere with transcription. Does not interact with preformed gRNA:tDNA duplexes. Mismatches and nt bulges are tolerated in the ternary complex, however, they significantly reduce the affinity of RsAgo:gRNA for tDNA. Mismatched tDNA can cause dissociation of gRNA from RsAgo. In situ binds 2 populations of RNA (15-19 and 45 nucleotides, nt) and a population of ssDNA 22-24 nt in length. The small sense RNA is probably derived from mRNA degradation and strongly enriched for U in the first and U/C in the second positions. The small DNA is enriched for sequences complementary to the RNA, with 3 nt overhangs on both ends; another nuclease may trim the ends. The sequences are largely derived from exogenous plasmids or genome-encoded foreign elements such as prophages and transposons. Forms a ternary complex with gRNA and double-stranded tDNA only when the tDNA is open. This is Protein argonaute from Cereibacter sphaeroides (strain ATCC 17025 / ATH 2.4.3) (Rhodobacter sphaeroides).